Reading from the N-terminus, the 325-residue chain is 2-oxoglutarate-dependent dioxygenase tropC (325 aa).

Residues 185 to 287 (PSIPMRLLHY…RYSVAFFLNG (103 aa)) enclose the Fe2OG dioxygenase domain. The Fe cation site is built by His210, Asp212, and His269. 2-oxoglutarate is bound at residue Arg278.

This sequence belongs to the iron/ascorbate-dependent oxidoreductase family. Fe(2+) serves as cofactor.

It participates in secondary metabolite biosynthesis. In terms of biological role, 2-oxoglutarate-dependent dioxygenase; part of the gene cluster that mediates the biosynthesis of the tropolone class of fungal maleic anhydrides. The pathway begins with the synthesis of 3-methylorcinaldehyde by the non-reducing polyketide synthase (PKS) tropA. 3-methylorcinaldehyde is the substrate for the FAD-dependent monooxygenase tropB to yield a dearomatized hydroxycyclohexadione. The 2-oxoglutarate-dependent dioxygenase tropC then performs the oxidative ring expansion to provide the first tropolone metabolite stipitaldehyde. Trop D converts stipitaldehyde into stipitacetal which is in turn converted to stipitalide by the short-chain dehydrogenase/reductase tropE. The next steps involve tropF, tropG, tropH, tropI and tropJ to form successive tropolone maleic anhydrides including stipitaldehydic, stipitatonic and stipitatic acids. The protein is 2-oxoglutarate-dependent dioxygenase tropC of Talaromyces stipitatus (strain ATCC 10500 / CBS 375.48 / QM 6759 / NRRL 1006) (Penicillium stipitatum).